Consider the following 757-residue polypeptide: RNA cytosine C(5)-methyltransferase NSUN2 (757 aa).

Positions 1–35 are disordered; it reads MGRRARGRRFQQPPQPEGEEDASDGGRKRGQAGWE. Residue Ser-23 is modified to Phosphoserine. Lys-46 is covalently cross-linked (Glycyl lysine isopeptide (Lys-Gly) (interchain with G-Cter in SUMO2)). Position 139 is a phosphoserine; by AURKB (Ser-139). S-adenosyl-L-methionine is bound by residues 184–190, Asp-215, Asp-242, and Asp-268; that span reads CAAPGSK. Cys-321 serves as the catalytic Nucleophile. Residues 436 to 504 are disordered; sequence NKRQPKVQNK…EKKDGVCGPP (69 aa). 2 positions are modified to phosphoserine: Ser-456 and Ser-473. The segment covering 463-476 has biased composition (polar residues); that stretch reads GNPSDQSELESQMI. Residues Lys-510 and Lys-515 each participate in a glycyl lysine isopeptide (Lys-Gly) (interchain with G-Cter in SUMO2) cross-link. At Lys-585 the chain carries N6-acetyllysine; alternate. At Lys-585 the chain carries N6-malonyllysine; alternate. Lys-585 is covalently cross-linked (Glycyl lysine isopeptide (Lys-Gly) (interchain with G-Cter in SUMO2); alternate). A Phosphoserine modification is found at Ser-592. Residues Lys-639, Lys-653, and Lys-659 each participate in a glycyl lysine isopeptide (Lys-Gly) (interchain with G-Cter in SUMO2) cross-link. The tract at residues 716-757 is disordered; it reads LTNENAASPEQPGDEDAKQTAQDPCVPDSVPGCDAAAAEPSR. A Phosphothreonine modification is found at Thr-717. Ser-723 bears the Phosphoserine mark.

The protein belongs to the class I-like SAM-binding methyltransferase superfamily. RsmB/NOP family. TRM4 subfamily. Interacts with NPM1 and NCL during interphase; interaction is disrupted following phosphorylation at Ser-139. In terms of processing, phosphorylated at Ser-139 by AURKB during mitosis, leading to abolish methyltransferase activity and the interaction with NPM1. Ubiquitously expressed at low level. Up-regulated in tumors. Dynamically expressed during morphogenesis and in adult skin: in adult skin, expression is up-regulated in the bulge and hair germ as soon as the hair follicle enters its growing phase (anagen). During anagen, expressed at highest level in cells of the hair germ that give rise to the hair matrix.

It localises to the nucleus. Its subcellular location is the nucleolus. The protein resides in the cytoplasm. It is found in the mitochondrion. The protein localises to the cytoskeleton. It localises to the spindle. Its subcellular location is the secreted. The protein resides in the extracellular exosome. It carries out the reaction cytidine(48) in tRNA + S-adenosyl-L-methionine = 5-methylcytidine(48) in tRNA + S-adenosyl-L-homocysteine + H(+). It catalyses the reaction cytidine(49) in tRNA + S-adenosyl-L-methionine = 5-methylcytidine(49) in tRNA + S-adenosyl-L-homocysteine + H(+). The enzyme catalyses cytidine(50) in tRNA + S-adenosyl-L-methionine = 5-methylcytidine(50) in tRNA + S-adenosyl-L-homocysteine + H(+). The catalysed reaction is cytidine(34) in tRNA precursor + S-adenosyl-L-methionine = 5-methylcytidine(34) in tRNA precursor + S-adenosyl-L-homocysteine + H(+). It carries out the reaction a cytidine in mRNA + S-adenosyl-L-methionine = a 5-methylcytidine in mRNA + S-adenosyl-L-homocysteine + H(+). Inhibited by magnesium ions. RNA cytosine C(5)-methyltransferase that methylates cytosine to 5-methylcytosine (m5C) in various RNAs, such as tRNAs, mRNAs and some long non-coding RNAs (lncRNAs). Involved in various processes, such as epidermal stem cell differentiation, testis differentiation and maternal to zygotic transition during early development: acts by increasing protein synthesis; cytosine C(5)-methylation promoting tRNA stability and preventing mRNA decay. Methylates cytosine to 5-methylcytosine (m5C) at positions 34 and 48 of intron-containing tRNA(Leu)(CAA) precursors, and at positions 48, 49 and 50 of tRNA(Gly)(GCC) precursors. tRNA methylation is required generation of RNA fragments derived from tRNAs (tRFs). Also mediates C(5)-methylation of mitochondrial tRNAs. Catalyzes cytosine C(5)-methylation of mRNAs, leading to stabilize them and prevent mRNA decay: mRNA stabilization involves YBX1 that specifically recognizes and binds m5C-modified transcripts. Cytosine C(5)-methylation of mRNAs also regulates mRNA export: methylated transcripts are specifically recognized by THOC4/ALYREF, which mediates mRNA nucleo-cytoplasmic shuttling. Also mediates cytosine C(5)-methylation of non-coding RNAs, such as vault RNAs (vtRNAs), promoting their processing into regulatory small RNAs. Cytosine C(5)-methylation of vtRNA VTRNA1.1 promotes its processing into small-vault RNA4 (svRNA4) and regulates epidermal differentiation. May act downstream of Myc to regulate epidermal cell growth and proliferation. Required for proper spindle assembly and chromosome segregation, independently of its methyltransferase activity. This is RNA cytosine C(5)-methyltransferase NSUN2 from Mus musculus (Mouse).